The following is a 427-amino-acid chain: Flotillin-1 (427 aa).

A phosphoserine mark is found at S19, S163, and S385. T387 is subject to Phosphothreonine.

Belongs to the band 7/mec-2 family. Flotillin subfamily. In terms of assembly, heterooligomeric complex of flotillin-1 and flotillin-2 and caveolin-1 and caveolin-2. Interacts with ECPAS.

It is found in the cell membrane. The protein localises to the endosome. It localises to the membrane. The protein resides in the caveola. Its subcellular location is the melanosome. It is found in the membrane raft. Its function is as follows. May act as a scaffolding protein within caveolar membranes, functionally participating in formation of caveolae or caveolae-like vesicles. In Macaca mulatta (Rhesus macaque), this protein is Flotillin-1 (FLOT1).